The following is a 179-amino-acid chain: HTH-type transcriptional regulator AldR (179 aa).

In terms of domain architecture, HTH asnC-type spans L32 to P93. A DNA-binding region (H-T-H motif) is located at residues N51–R70.

In terms of assembly, homooctamer. Homotetramer. Tetramer of dimers. The N-terminal DNA-binding domains are swapped, forming a dimer, and four dimers are assembled into an octamer through crystal symmetry.

Its activity is regulated as follows. The DNA-binding activity of AldR is modulated by interaction of AldR with various amino acids. Alanine, tryptophan, tyrosine and aspartate completely abolish the DNA binding ability of AldR. On the other hand, glutamate and asparagine reduce AldR binding to DNA but do not completely abolish it. Binding of amino acids can lead to structural modifications and changes in oligomeric association. Activity is also inhibited by 3 small molecule inhibitors, tetrahydroquinoline carbonitrile derivative (S010-0261), levothyroxine and liothyronine, which can disrupt the AldR-DNA complex. Functionally, transcriptional regulator that might play a role under hypoxic conditions. Regulates the expression of ald, which encodes L-alanine dehydrogenase. Serves as both an activator for ald expression in the presence of L-alanine and a repressor in the absence of L-alanine. Acts by binding directly to the upstream region of the ald gene. Four AldR-binding sites (O2, O1, O4 and O3) were identified upstream of the ald gene. O2, O1 and O4 are required for the induction of ald expression by alanine, while O3 is directly involved in the repression of ald expression, by occluding the access of RNA polymerase to the ald promoter. In addition to O3, both O1 and O4 are also necessary for full repression of ald expression in the absence of alanine. This Mycobacterium tuberculosis (strain ATCC 25618 / H37Rv) protein is HTH-type transcriptional regulator AldR.